Here is a 156-residue protein sequence, read N- to C-terminus: Bursicon (156 aa).

Residues 1–26 form the signal peptide; it reads MYALDFLFIAFVYFAACHIQEKPVRA. 5 disulfide bridges follow: Cys37/Cys86, Cys51/Cys100, Cys61/Cys121, Cys65/Cys123, and Cys83/Cys126. The 91-residue stretch at 37-127 folds into the CTCK domain; it reads CQMTPVIHIL…PLECMCRPCG (91 aa).

As to quaternary structure, heterodimer of burs and pburs.

Its subcellular location is the secreted. Final heterodimeric neurohormone released at the end of the molting cycle, involved in the sclerotization (tanning) of the insect cuticle, melanization and wing spreading. In Manduca sexta (Tobacco hawkmoth), this protein is Bursicon.